Here is a 101-residue protein sequence, read N- to C-terminus: Urease subunit beta 1 (101 aa).

Belongs to the urease beta subunit family. In terms of assembly, heterotrimer of UreA (gamma), UreB (beta) and UreC (alpha) subunits. Three heterotrimers associate to form the active enzyme.

It localises to the cytoplasm. The enzyme catalyses urea + 2 H2O + H(+) = hydrogencarbonate + 2 NH4(+). It participates in nitrogen metabolism; urea degradation; CO(2) and NH(3) from urea (urease route): step 1/1. In terms of biological role, disruption of the ure1 gene cluster suggests that it protects brucellae during their passage through the stomach. The major route of infection in human brucellosis is oral. This chain is Urease subunit beta 1, found in Brucella abortus (strain 2308).